Consider the following 337-residue polypeptide: DNA-directed RNA polymerase subunit alpha (337 aa).

Residues Met-1–Glu-233 are alpha N-terminal domain (alpha-NTD). The segment at Lys-265–Phe-337 is alpha C-terminal domain (alpha-CTD).

Belongs to the RNA polymerase alpha chain family. As to quaternary structure, in plastids the minimal PEP RNA polymerase catalytic core is composed of four subunits: alpha, beta, beta', and beta''. When a (nuclear-encoded) sigma factor is associated with the core the holoenzyme is formed, which can initiate transcription.

The protein resides in the plastid. It is found in the chloroplast. The enzyme catalyses RNA(n) + a ribonucleoside 5'-triphosphate = RNA(n+1) + diphosphate. Functionally, DNA-dependent RNA polymerase catalyzes the transcription of DNA into RNA using the four ribonucleoside triphosphates as substrates. This is DNA-directed RNA polymerase subunit alpha from Nicotiana tomentosiformis (Tobacco).